A 573-amino-acid chain; its full sequence is 2-succinyl-5-enolpyruvyl-6-hydroxy-3-cyclohexene-1-carboxylate synthase (573 aa).

This sequence belongs to the TPP enzyme family. MenD subfamily. Homodimer. It depends on Mg(2+) as a cofactor. The cofactor is Mn(2+). Thiamine diphosphate serves as cofactor.

It catalyses the reaction isochorismate + 2-oxoglutarate + H(+) = 5-enolpyruvoyl-6-hydroxy-2-succinyl-cyclohex-3-ene-1-carboxylate + CO2. The protein operates within quinol/quinone metabolism; 1,4-dihydroxy-2-naphthoate biosynthesis; 1,4-dihydroxy-2-naphthoate from chorismate: step 2/7. It functions in the pathway quinol/quinone metabolism; menaquinone biosynthesis. In terms of biological role, catalyzes the thiamine diphosphate-dependent decarboxylation of 2-oxoglutarate and the subsequent addition of the resulting succinic semialdehyde-thiamine pyrophosphate anion to isochorismate to yield 2-succinyl-5-enolpyruvyl-6-hydroxy-3-cyclohexene-1-carboxylate (SEPHCHC). The chain is 2-succinyl-5-enolpyruvyl-6-hydroxy-3-cyclohexene-1-carboxylate synthase from Shewanella oneidensis (strain ATCC 700550 / JCM 31522 / CIP 106686 / LMG 19005 / NCIMB 14063 / MR-1).